Consider the following 1180-residue polypeptide: DNA-directed RNA polymerase subunit beta' (1180 aa).

Positions 60, 62, 75, and 78 each coordinate Zn(2+). D449, D451, and D453 together coordinate Mg(2+). C792, C872, C879, and C882 together coordinate Zn(2+).

Belongs to the RNA polymerase beta' chain family. The RNAP catalytic core consists of 2 alpha, 1 beta, 1 beta' and 1 omega subunit. When a sigma factor is associated with the core the holoenzyme is formed, which can initiate transcription. Mg(2+) serves as cofactor. Zn(2+) is required as a cofactor.

It carries out the reaction RNA(n) + a ribonucleoside 5'-triphosphate = RNA(n+1) + diphosphate. Its function is as follows. DNA-dependent RNA polymerase catalyzes the transcription of DNA into RNA using the four ribonucleoside triphosphates as substrates. In Heliobacterium modesticaldum (strain ATCC 51547 / Ice1), this protein is DNA-directed RNA polymerase subunit beta'.